Here is a 214-residue protein sequence, read N- to C-terminus: Adenylate kinase (214 aa).

Residue 10–15 participates in ATP binding; sequence GAGKGT. Positions 30 to 59 are NMP; the sequence is STGDMFRAAVKNETPLGLEAKSYMDKGHLV. AMP-binding positions include Thr31, Arg36, 57–59, 85–88, and Gln92; these read HLV and GFPR. The interval 126–163 is LID; it reads GRWICPVCGASYHTMFNPPKEAGVCDKDGGKLYQREDD. Position 127 (Arg127) interacts with ATP. Zn(2+) is bound by residues Cys130 and Cys133. 136–137 is an ATP binding site; the sequence is SY. Zn(2+)-binding residues include Cys150 and Asp153. Residues Arg160 and Arg171 each coordinate AMP. Gln199 is an ATP binding site.

Belongs to the adenylate kinase family. Monomer.

The protein localises to the cytoplasm. It catalyses the reaction AMP + ATP = 2 ADP. Its pathway is purine metabolism; AMP biosynthesis via salvage pathway; AMP from ADP: step 1/1. In terms of biological role, catalyzes the reversible transfer of the terminal phosphate group between ATP and AMP. Plays an important role in cellular energy homeostasis and in adenine nucleotide metabolism. The chain is Adenylate kinase from Brevibacillus brevis (strain 47 / JCM 6285 / NBRC 100599).